Here is a 196-residue protein sequence, read N- to C-terminus: Phosphoheptose isomerase (196 aa).

Residues 38-196 enclose the SIS domain; the sequence is LIAGYRAGAR…VEHALFAPRQ (159 aa). 53-55 serves as a coordination point for substrate; the sequence is NGG. Residues H62 and E66 each coordinate Zn(2+). Substrate contacts are provided by residues E66, 95–96, 121–123, S126, and Q173; these read ND and STS. Positions 173 and 181 each coordinate Zn(2+).

This sequence belongs to the SIS family. GmhA subfamily. It depends on Zn(2+) as a cofactor.

It localises to the cytoplasm. It catalyses the reaction 2 D-sedoheptulose 7-phosphate = D-glycero-alpha-D-manno-heptose 7-phosphate + D-glycero-beta-D-manno-heptose 7-phosphate. It functions in the pathway carbohydrate biosynthesis; D-glycero-D-manno-heptose 7-phosphate biosynthesis; D-glycero-alpha-D-manno-heptose 7-phosphate and D-glycero-beta-D-manno-heptose 7-phosphate from sedoheptulose 7-phosphate: step 1/1. Catalyzes the isomerization of sedoheptulose 7-phosphate in D-glycero-D-manno-heptose 7-phosphate. This Mycobacterium bovis (strain ATCC BAA-935 / AF2122/97) protein is Phosphoheptose isomerase.